Reading from the N-terminus, the 615-residue chain is Gluconate 2-dehydrogenase flavoprotein (615 aa).

The signal sequence occupies residues 1–22 (MERGERVSVPVSGYSRGEGVTV). The active-site Proton acceptor is His-542.

It belongs to the GMC oxidoreductase family. As to quaternary structure, heterotrimer. FAD is required as a cofactor.

It is found in the cell membrane. It carries out the reaction D-gluconate + A = 2-dehydro-D-gluconate + AH2. Part of the heterotrimer that catalyzes the conversion of D-gluconate to 2-dehydro-D-gluconate. This subunit functions as the dehydrogenase. In Pantoea cypripedii (Pectobacterium cypripedii), this protein is Gluconate 2-dehydrogenase flavoprotein.